Consider the following 277-residue polypeptide: MKLNEKLYAFFSEHVEQMAEEWIETMEESDPNSLYALHNATVTEELKEQDREFYRHLNYMYVLPEKQFLEEFQEWVIELTNDQKHLDTPVQYVIREFMRNRRLYTKYFEKFAEENESAFEPGEKQKWADLIVKVFDFTIYTFVDHAEMNAKQQLNAQREMILELSSPVITLSKSTALLPLVGDIDTERAKFILENTLQACAKRRVEHLLIDLSGVVVVDTMVAHQIFKLIEALNLIGVRSTLSGIRPEIAQTAVQLGIDFSNITIKTNLAQALNYHQ.

In terms of domain architecture, STAS spans serine 165 to histidine 276. The residue at position 186 (threonine 186) is a Phosphothreonine.

Interacts with RsbRA and RsbS in the stressosome. The stressosome probably also contains RsbRC and RsbRD. Post-translationally, phosphorylated by RsbT.

In terms of biological role, one of 4 functionally non-identical RsbR paralogs, it functions in the environmental signaling branch of the general stress response. Negative regulator of sigma-B activity. Non-phosphorylated RsbS binds to RsbT, preventing its association with RsbU. Requires any one of RsbRA, RsbRB, RsbRC or RsbRD to sequester RsbT. When RsbS and the RsbR paralog(s) are phosphorylated, they release RsbT, which can then bind and activate RsbU. The chain is RsbT co-antagonist protein RsbRB (rsbRB) from Bacillus subtilis (strain 168).